A 30-amino-acid polypeptide reads, in one-letter code: Alanine carboxypeptidase (30 aa).

The catalysed reaction is Release of a C-terminal alanine from a peptide or a variety of pteroyl or acyl groups.. This Geobacillus stearothermophilus (Bacillus stearothermophilus) protein is Alanine carboxypeptidase.